A 400-amino-acid chain; its full sequence is Acetate kinase (400 aa).

A Mg(2+)-binding site is contributed by asparagine 10. Residue lysine 17 participates in ATP binding. Arginine 91 is a binding site for substrate. The Proton donor/acceptor role is filled by aspartate 148. Residues 208–212 (HLGNG), 283–285 (DCR), and 331–335 (GIGEN) each bind ATP. Glutamate 385 lines the Mg(2+) pocket.

Belongs to the acetokinase family. As to quaternary structure, homodimer. Mg(2+) serves as cofactor. The cofactor is Mn(2+).

It is found in the cytoplasm. The catalysed reaction is acetate + ATP = acetyl phosphate + ADP. The protein operates within metabolic intermediate biosynthesis; acetyl-CoA biosynthesis; acetyl-CoA from acetate: step 1/2. In terms of biological role, catalyzes the formation of acetyl phosphate from acetate and ATP. Can also catalyze the reverse reaction. The chain is Acetate kinase from Shewanella frigidimarina (strain NCIMB 400).